A 289-amino-acid chain; its full sequence is ATP phosphoribosyltransferase (289 aa).

It belongs to the ATP phosphoribosyltransferase family. Long subfamily. Requires Mg(2+) as cofactor.

It is found in the cytoplasm. It carries out the reaction 1-(5-phospho-beta-D-ribosyl)-ATP + diphosphate = 5-phospho-alpha-D-ribose 1-diphosphate + ATP. Its pathway is amino-acid biosynthesis; L-histidine biosynthesis; L-histidine from 5-phospho-alpha-D-ribose 1-diphosphate: step 1/9. Feedback inhibited by histidine. Functionally, catalyzes the condensation of ATP and 5-phosphoribose 1-diphosphate to form N'-(5'-phosphoribosyl)-ATP (PR-ATP). Has a crucial role in the pathway because the rate of histidine biosynthesis seems to be controlled primarily by regulation of HisG enzymatic activity. The chain is ATP phosphoribosyltransferase from Pelotomaculum thermopropionicum (strain DSM 13744 / JCM 10971 / SI).